Reading from the N-terminus, the 100-residue chain is UPF0473 protein Lm4b_01511 (100 aa).

This sequence belongs to the UPF0473 family.

The sequence is that of UPF0473 protein Lm4b_01511 from Listeria monocytogenes serotype 4b (strain CLIP80459).